Here is a 33-residue protein sequence, read N- to C-terminus: Brevinin-2CDYb (33 aa).

C27 and C33 are disulfide-bonded.

The protein belongs to the frog skin active peptide (FSAP) family. Brevinin subfamily. In terms of tissue distribution, expressed by the skin glands.

It localises to the secreted. Functionally, antimicrobial peptide. The polypeptide is Brevinin-2CDYb (Rana dybowskii (Dybovsky's frog)).